We begin with the raw amino-acid sequence, 629 residues long: Protein EDS1B (629 aa).

Serine 123 acts as the Nucleophile in catalysis. Residues aspartate 187 and histidine 317 each act as charge relay system in the active site.

Interacts (via N-terminus) with PAD4 and SAG101. Part of a nuclear complex made of EDS1, PAD4 and SAG101, that can be redirected to the cytoplasm in the presence of an extranuclear form of EDS1. Does not interact with itself or with EDS1.

The protein localises to the nucleus. The protein resides in the cytoplasm. Functionally, acts as a second functional copy of EDS1. Can mediate HRT-mediated resistance to turnip crinkle virus. This is Protein EDS1B (EDS1B) from Arabidopsis thaliana (Mouse-ear cress).